Consider the following 184-residue polypeptide: UPF0397 protein SAB2561c (184 aa).

5 helical membrane-spanning segments follow: residues Val11–Pro31, Ala44–Val64, Ala77–Leu97, Met111–Pro131, and Gln148–Leu168.

Belongs to the UPF0397 family.

The protein resides in the cell membrane. The polypeptide is UPF0397 protein SAB2561c (Staphylococcus aureus (strain bovine RF122 / ET3-1)).